The sequence spans 507 residues: ATP synthase subunit alpha, chloroplastic (507 aa).

ATP is bound at residue 170-177 (GDRQTGKT).

It belongs to the ATPase alpha/beta chains family. F-type ATPases have 2 components, CF(1) - the catalytic core - and CF(0) - the membrane proton channel. CF(1) has five subunits: alpha(3), beta(3), gamma(1), delta(1), epsilon(1). CF(0) has four main subunits: a, b, b' and c.

The protein localises to the plastid. The protein resides in the chloroplast thylakoid membrane. It carries out the reaction ATP + H2O + 4 H(+)(in) = ADP + phosphate + 5 H(+)(out). Produces ATP from ADP in the presence of a proton gradient across the membrane. The alpha chain is a regulatory subunit. The sequence is that of ATP synthase subunit alpha, chloroplastic from Spinacia oleracea (Spinach).